Consider the following 366-residue polypeptide: MKIADLMTLLDHHVPFSTAESWDNVGLLIGDGDVEVTGVLTALDCTLEVVNEAIEKGYNTIISHHPLIFKGVTSLKANGYGLIIRKLIQHDINLIAMHTNLDVNPYGVNMMLAKAMGLKNISIINNQQDVYYKVQTYIPKDNVGPFKDKLSENGLAQEGNYEYCFFESEGRGQFKPVGEANPTIGQIDKIEDVDEVKIEFMIDAYQKSRAEQLIKQYHPYETPVFDFIEIKQTSLYGLGVMAEVDNQMTLEDFAADIKSKLNIPSVRFVGESNQKIKRIAIIGGSGIGYEYQAVQQGADVFVTGDIKHHDALDAKIHGVNLIDINHYSEYVMKEGLKTLLMNWFNIEKINIDVEASTINTDPFQYI.

Residues His64, His65, Asp102, His326, and Glu329 each contribute to the Zn(2+) site.

Belongs to the GTP cyclohydrolase I type 2/NIF3 family. As to quaternary structure, toroid-shaped homohexamer that has a central cavity of about 38 Angstroms diameter.

The sequence is that of GTP cyclohydrolase 1 type 2 homolog from Staphylococcus aureus (strain Mu50 / ATCC 700699).